Consider the following 276-residue polypeptide: D-apionate oxidoisomerase (276 aa).

NAD(+)-binding positions include Gly12 to Met14, Glu33, and Asp69. Zn(2+) contacts are provided by His114 and Glu184.

This sequence belongs to the ApnO family. The cofactor is Zn(2+).

It carries out the reaction D-apionate + NAD(+) = 3-oxoisoapionate + NADH + H(+). The protein operates within carbohydrate metabolism. In terms of biological role, involved in catabolism of D-apiose. Catalyzes the conversion of D-apionate to 3-oxo-isoapionate. This is D-apionate oxidoisomerase from Cupriavidus necator (strain ATCC 43291 / DSM 13513 / CCUG 52238 / LMG 8453 / N-1) (Ralstonia eutropha).